Consider the following 166-residue polypeptide: Cyclin-dependent kinase 4 inhibitor D (166 aa).

Methionine 1 carries the N-acetylmethionine modification. 4 ANK repeats span residues 41–69, 73–102, 106–135, and 138–166; these read FGKT…SPNV, SGTS…DVNV, TGAL…LHRR, and RGLT…VAPL.

It belongs to the CDKN2 cyclin-dependent kinase inhibitor family. As to quaternary structure, interacts with CDK6.

Its subcellular location is the nucleus. It is found in the cytoplasm. Functionally, interacts strongly with CDK4 and CDK6 and inhibits them. This chain is Cyclin-dependent kinase 4 inhibitor D (CDKN2D), found in Homo sapiens (Human).